The following is a 622-amino-acid chain: MSFSTINSNVNKTTGDSNNNTTENSSTADLLGMDLLQSGPRLMNTMQPNNSSDMLHINNKTNNVQQPAGNTNISSANAGAKAPANEFVRKLFRILENNEYPDIVTWTENGKSFVVLDTGKFTTHILPNHFKHSNFASFVRQLNKYDFHKVKRSPEERQRCKYGEQSWEFQHPEFRVHYGKGLDNIKRKIPAQRKVLLDESQKALLHFNSEGTNPNNPSGSLLNESTTELLLSNTVSKDAFGNLRRRVDKLQKELDMSKMESYATKVELQKLNSKYNTVIESLITFKTINENLLNNFNTLCSTLANNGIEVPIFGDNGNRNPTGNTNPATTTAIQSNNNTNNASPATSTVSLQLPNLPDQNSLTPNAQNNTVTLRKGFHVLLVEDDAVSIQLCSKFLRKYGCTVQVVSDGLSAISTLEKYRYDLVLMDIVMPNLDGATATSIVRSFDNETPIIAMTGNIMNQDLITYLQHGMNDILAKPFTRDDLHSILIRYLKDRIPLCEQQLPPRNSSPQTHSNTNTANSNPNTINEQSLAMLPQDNPSTTTPVTPGASISSAQHVQQGQQEQQHQIFHAQQQQQHHNAIANARSDVAIPNLEHEINTVPHSSMGSTPQLPQSTLQENQLS.

Over residues M1 to K12 the composition is skewed to polar residues. The interval M1 to D29 is disordered. Low complexity predominate over residues T13–T27. Positions A84 to P190 are DNA-binding domain. The tract at residues T212–L303 is hydrophobic repeat HR-A/B. Residues F240–E260 are a coiled coil. In terms of domain architecture, Response regulatory spans H378 to L492. 4-aspartylphosphate is present on D427. Disordered stretches follow at residues Q501–N579 and T599–S622. A compositionally biased stretch (low complexity) spans T512–N527. The segment covering D537–A554 has biased composition (polar residues). Over residues Q555–H578 the composition is skewed to low complexity. Polar residues predominate over residues V600 to S622.

It belongs to the SKN7 family. Homotrimer. Post-translationally, the phosphorelay mechanism involves the sequential transfer of a phosphate group from 'His-576' (H1) to 'Asp-1144' (D1) of SLN1, then to 'His-64' (H2) of YPD1 and finally to Asp-427 (D2) of SKN7.

Its subcellular location is the nucleus. Transcription factor that is part of a SLN1-YPD1-SKN7 two-component regulatory system, which controls gene expression in response to changes in the osmolarity of the extracellular environment. Under low osmotic conditions, phosphorylated and activated by the phosphorelay intermediate protein YPD1. Also activated in response to oxidative stress, independent on the two-component regulatory system. Regulates heat shock genes in response to oxidative stress and genes involved in cell wall integrity in response to osmotic changes. The chain is Transcription factor SKN7 (SKN7) from Saccharomyces cerevisiae (strain ATCC 204508 / S288c) (Baker's yeast).